The following is a 389-amino-acid chain: Phosphoglycerate kinase (389 aa).

Residues 21–23, R36, 59–62, R112, and R145 contribute to the substrate site; these read DLN and HLGR. ATP is bound by residues K196, E313, and 342–345; that span reads GGDT.

The protein belongs to the phosphoglycerate kinase family. Monomer.

The protein localises to the cytoplasm. It catalyses the reaction (2R)-3-phosphoglycerate + ATP = (2R)-3-phospho-glyceroyl phosphate + ADP. It participates in carbohydrate degradation; glycolysis; pyruvate from D-glyceraldehyde 3-phosphate: step 2/5. The chain is Phosphoglycerate kinase from Histophilus somni (strain 2336) (Haemophilus somnus).